Here is a 302-residue protein sequence, read N- to C-terminus: Sulfate adenylyltransferase subunit 2 (302 aa).

The protein belongs to the PAPS reductase family. CysD subfamily. In terms of assembly, heterodimer composed of CysD, the smaller subunit, and CysN.

The enzyme catalyses sulfate + ATP + H(+) = adenosine 5'-phosphosulfate + diphosphate. The protein operates within sulfur metabolism; hydrogen sulfide biosynthesis; sulfite from sulfate: step 1/3. In terms of biological role, with CysN forms the ATP sulfurylase (ATPS) that catalyzes the adenylation of sulfate producing adenosine 5'-phosphosulfate (APS) and diphosphate, the first enzymatic step in sulfur assimilation pathway. APS synthesis involves the formation of a high-energy phosphoric-sulfuric acid anhydride bond driven by GTP hydrolysis by CysN coupled to ATP hydrolysis by CysD. This chain is Sulfate adenylyltransferase subunit 2, found in Xanthomonas euvesicatoria pv. vesicatoria (strain 85-10) (Xanthomonas campestris pv. vesicatoria).